A 555-amino-acid chain; its full sequence is Glucose-6-phosphate isomerase (555 aa).

E353 acts as the Proton donor in catalysis. Residues H384 and K516 contribute to the active site.

The protein belongs to the GPI family.

Its subcellular location is the cytoplasm. The enzyme catalyses alpha-D-glucose 6-phosphate = beta-D-fructose 6-phosphate. Its pathway is carbohydrate biosynthesis; gluconeogenesis. It participates in carbohydrate degradation; glycolysis; D-glyceraldehyde 3-phosphate and glycerone phosphate from D-glucose: step 2/4. Catalyzes the reversible isomerization of glucose-6-phosphate to fructose-6-phosphate. In Methylobacillus flagellatus (strain ATCC 51484 / DSM 6875 / VKM B-1610 / KT), this protein is Glucose-6-phosphate isomerase.